The primary structure comprises 194 residues: Prefoldin subunit 3 (194 aa).

It belongs to the prefoldin subunit alpha family. As to quaternary structure, heterohexamer of two PFD-alpha type and four PFD-beta type subunits. Interacts with itself. Interacts with Vhl and betaTub56D/tubulin beta-1 chain. Interacts with tubulin alpha-beta heterodimers by itself or in complex with Vhl. Does not interact with microtubules (MTs). As to expression, expressed in larval central nervous system (CNS) and pupal testis (at protein level).

The protein localises to the cytoplasm. Binds specifically to cytosolic chaperonin (c-CPN) and transfers target proteins to it. Binds to nascent polypeptide chain and promotes folding in an environment in which there are many competing pathways for nonnative proteins. Required for tubulin stability and spindle and centrosome formation in cooperation with Vhl. The protein is Prefoldin subunit 3 (mgr) of Drosophila melanogaster (Fruit fly).